The sequence spans 409 residues: Serine/threonine transporter SstT (409 aa).

9 consecutive transmembrane segments (helical) span residues 24–44 (LALG…AGLF), 48–68 (FVGA…AATI), 82–102 (IIVL…IAGM), 142–162 (AIAN…GAAL), 194–214 (LGIF…ALAG), 218–238 (LLAV…PAIV), 292–312 (IPLG…VLAM), 319–339 (GIQV…VSAC), and 365–385 (VAMQ…SAET).

The protein belongs to the dicarboxylate/amino acid:cation symporter (DAACS) (TC 2.A.23) family.

It localises to the cell inner membrane. It carries out the reaction L-serine(in) + Na(+)(in) = L-serine(out) + Na(+)(out). It catalyses the reaction L-threonine(in) + Na(+)(in) = L-threonine(out) + Na(+)(out). Functionally, involved in the import of serine and threonine into the cell, with the concomitant import of sodium (symport system). In Neisseria meningitidis serogroup C / serotype 2a (strain ATCC 700532 / DSM 15464 / FAM18), this protein is Serine/threonine transporter SstT.